The primary structure comprises 88 residues: ATPase inhibitor mai-1, mitochondrial (88 aa).

Over residues 1–18 (MSGSGSGSGAGHGGGSGG) the composition is skewed to gly residues. Residues 1–41 (MSGSGSGSGAGHGGGSGGSIREAGGSLGMMGATREEEYFRR) form a disordered region. Residues 39 to 87 (FRRQQKDQLDNLKKKLEADMTQSQQEIRDHEKVLEQHQQRLKEIEKGHG) adopt a coiled-coil conformation.

The protein belongs to the ATPase inhibitor family. Post-translationally, does not seem to include a transit peptide.

The protein resides in the mitochondrion. Its function is as follows. Thought to be a regulatory component of the ATP-synthesizing complex in the mitochondria. This is ATPase inhibitor mai-1, mitochondrial (mai-1) from Caenorhabditis elegans.